Here is a 568-residue protein sequence, read N- to C-terminus: UPF0313 protein FN0734 (568 aa).

The region spanning 289-562 is the Radical SAM core domain; sequence ALDTIKYSVT…KQKQKDIVTE (274 aa). [4Fe-4S] cluster contacts are provided by cysteine 303, cysteine 307, and cysteine 310. The tract at residues 546–568 is disordered; the sequence is VEKDNGKKQKQKDIVTEKRKNRK.

It belongs to the UPF0313 family. The cofactor is [4Fe-4S] cluster.

This chain is UPF0313 protein FN0734, found in Fusobacterium nucleatum subsp. nucleatum (strain ATCC 25586 / DSM 15643 / BCRC 10681 / CIP 101130 / JCM 8532 / KCTC 2640 / LMG 13131 / VPI 4355).